A 245-amino-acid polypeptide reads, in one-letter code: Thymidylate kinase (245 aa).

55–62 (GIDGVGKS) is an ATP binding site.

Belongs to the thymidylate kinase family.

The catalysed reaction is dTMP + ATP = dTDP + ADP. Its function is as follows. Phosphorylation of dTMP to form dTDP in both de novo and salvage pathways of dTTP synthesis. The protein is Thymidylate kinase of Rhodopirellula baltica (strain DSM 10527 / NCIMB 13988 / SH1).